A 61-amino-acid polypeptide reads, in one-letter code: Large ribosomal subunit protein bL32 (61 aa).

Belongs to the bacterial ribosomal protein bL32 family.

In Syntrophus aciditrophicus (strain SB), this protein is Large ribosomal subunit protein bL32.